Consider the following 336-residue polypeptide: CST complex subunit STN1 (336 aa).

The OB DNA-binding region spans 49–126; the sequence is VDILGTVVCV…EVVASIFYKV (78 aa). Winged helix-turn-helix (wHTH) regions lie at residues 162-263 and 264-336; these read QSQE…YVTD and HDKE…YTAF.

This sequence belongs to the CTC1 family. In terms of assembly, component of the CST complex.

It is found in the nucleus. The protein resides in the chromosome. The protein localises to the telomere. Functionally, component of the CST complex proposed to act as a specialized replication factor promoting DNA replication under conditions of replication stress or natural replication barriers such as the telomere duplex. The CST complex binds single-stranded DNA with high affinity in a sequence-independent manner, while isolated subunits bind DNA with low affinity by themselves. Initially the CST complex has been proposed to protect telomeres from DNA degradation. However, the CST complex has been shown to be involved in several aspects of telomere replication. This chain is CST complex subunit STN1, found in Aquarana catesbeiana (American bullfrog).